Reading from the N-terminus, the 895-residue chain is MSAETPITLNMDTQDLQIQTFTVEKLLEPLIIQVTTLVNCPQNPSNRKKGRSKRARVLLASVEEATWNLLDKGEMIAKEATVLKEELAAALQEVRKESKALKVSAERFTDDPCYLPKREAVVQAARALLAAVTRLLVLADMIDVMCLLQHVSSFQRTFESLKNVSNKSDLQRTYQKLGKELESLDYLAFKRQQDLKSPSQRDEIAGARATLKENSPLLHSICSACLEHSDVASLKASKDTVCEEIQNALDVISNASQGIQNAPAPPEPQAATLGSAFDELENLIVLNPLTVTEEDVRPSLEKRLEAIISGAALLADSSCTRDLHRERIIAECNAIRQALQDLLTEYMSNTGKTERSNTLNTAIVNMSKKTRDLRRQLRKAIIDHISDSFLDTTVPLLVLIEAAKNGRVKEIKDYAAIFHEHTGRLVEVANLACSMSTNEDGIKIVRIAANHLETLCPQIINAALALASRPKSQVVKNTMEMYKRTWEHYIHVLTEAVDDITSIDDFLAVSESHILEDVNKCIIALRDQDADNLDRAAGAIRGRAARVAHIVAGEMDSYEPGAYTEGVMRNVNFLTSTVIPEFVTQVNVALDALSKNSLTALDDNQFVDISKKIYDTIHDIRCSVMMIRTPEELEDVSDLEDDHEVRSHTSIQTEGKTDRAKMTQLPEAEKEKIAEQVADFKKVKSKLDAEIEIWDDTSNDIIVLAKKMCMIMMEMTDFTRGKGPLKHTTDVIYAAKMISESGSRMDVLARQIANQCPDPPCKQDLLAYLEQIKFYSHQLKICSQVKAEIQNLGGELIVSALDSVTSLIQAAKNLMNAVVQTVKMSYIASTKIIRIQSSAGPRHPVVMWRMKAPAKKPLIKREKPEETWAAVRRGSAKKKIHPVQVMSEFRGRQVY.

The stretch at 74-107 forms a coiled coil; sequence EMIAKEATVLKEELAAALQEVRKESKALKVSAER. Position 160 is a phosphoserine (S160). The stretch at 325–379 forms a coiled coil; that stretch reads RERIIAECNAIRQALQDLLTEYMSNTGKTERSNTLNTAIVNMSKKTRDLRRQLRK. Phosphothreonine is present on T361. A disordered region spans residues 635 to 660; the sequence is DVSDLEDDHEVRSHTSIQTEGKTDRA. Phosphoserine occurs at positions 637 and 647. T649 carries the post-translational modification Phosphothreonine.

It belongs to the vinculin/alpha-catenin family. As to quaternary structure, interacts with CTNNB1. Interacts with PKP2. In terms of tissue distribution, expressed in heart (at protein level).

The protein resides in the cytoplasm. Its subcellular location is the cytoskeleton. The protein localises to the cell junction. It is found in the desmosome. In terms of biological role, may be involved in formation of stretch-resistant cell-cell adhesion complexes. This Mus musculus (Mouse) protein is Catenin alpha-3.